Here is a 261-residue protein sequence, read N- to C-terminus: Indole-3-glycerol phosphate synthase (261 aa).

It belongs to the TrpC family.

It carries out the reaction 1-(2-carboxyphenylamino)-1-deoxy-D-ribulose 5-phosphate + H(+) = (1S,2R)-1-C-(indol-3-yl)glycerol 3-phosphate + CO2 + H2O. Its pathway is amino-acid biosynthesis; L-tryptophan biosynthesis; L-tryptophan from chorismate: step 4/5. This Paraburkholderia xenovorans (strain LB400) protein is Indole-3-glycerol phosphate synthase.